We begin with the raw amino-acid sequence, 180 residues long: Adenine phosphoribosyltransferase (180 aa).

This sequence belongs to the purine/pyrimidine phosphoribosyltransferase family. Homodimer.

It localises to the cytoplasm. The enzyme catalyses AMP + diphosphate = 5-phospho-alpha-D-ribose 1-diphosphate + adenine. The protein operates within purine metabolism; AMP biosynthesis via salvage pathway; AMP from adenine: step 1/1. Functionally, catalyzes a salvage reaction resulting in the formation of AMP, that is energically less costly than de novo synthesis. The polypeptide is Adenine phosphoribosyltransferase (Marinobacter nauticus (strain ATCC 700491 / DSM 11845 / VT8) (Marinobacter aquaeolei)).